The sequence spans 868 residues: Pro-neuregulin-2, membrane-bound isoform (868 aa).

Residues Met-1–Ala-114 form a disordered region. A propeptide spanning residues Met-1–Ala-127 is cleaved from the precursor. Residues Ser-19–Pro-75 are compositionally biased toward low complexity. Residues Asn-33 and Asn-34 are each glycosylated (N-linked (GlcNAc...) asparagine). The span at Ala-76–Arg-90 shows a compositional bias: pro residues. A compositionally biased stretch (low complexity) spans Ser-91–Gly-108. The Extracellular portion of the chain corresponds to Cys-128–Arg-429. Residues Asn-163, Asn-294, and Asn-362 are each glycosylated (N-linked (GlcNAc...) asparagine). One can recognise an Ig-like C2-type domain in the interval Pro-253–Ser-348. 4 cysteine pairs are disulfide-bonded: Cys-273–Cys-327, Cys-361–Cys-375, Cys-369–Cys-386, and Cys-388–Cys-397. An EGF-like domain is found at His-357–Leu-398. A helical transmembrane segment spans residues Val-430–Ala-450. Residues Tyr-451–Leu-868 are Cytoplasmic-facing. Disordered stretches follow at residues Met-469–Asp-488, Thr-516–Leu-553, Leu-671–Arg-690, Ala-720–Leu-806, and Leu-823–Leu-868. The span at Ser-518 to Ser-530 shows a compositional bias: low complexity. Basic and acidic residues predominate over residues His-538–Glu-551. The segment covering Leu-766–Ala-794 has biased composition (low complexity).

This sequence belongs to the neuregulin family. As to quaternary structure, interacts with ERBB3 and ERBB4. Proteolytic cleavage close to the plasma membrane on the external face leads to the release of the soluble growth factor form. In terms of processing, extensive glycosylation precedes the proteolytic cleavage. As to expression, expressed in most parts of the brain, especially the olfactory bulb and cerebellum where it localizes in granule and Purkinje cells. In the hippocampus, found in the granule cells of the dentate gyrus. In the basal forebrain, found in the cholinergic cells. In the hindbrain, weakly detectable in the motor trigeminal nucleus. Not detected in the hypothalamus. Also found in the liver and in the thymus. Not detected in heart, adrenal gland, or testis.

It is found in the cell membrane. The protein localises to the secreted. Functionally, direct ligand for ERBB3 and ERBB4 tyrosine kinase receptors. Concomitantly recruits ERBB1 and ERBB2 coreceptors, resulting in ligand-stimulated tyrosine phosphorylation and activation of the ERBB receptors. May also promote the heterodimerization with the EGF receptor. The chain is Pro-neuregulin-2, membrane-bound isoform (Nrg2) from Rattus norvegicus (Rat).